The chain runs to 806 residues: Sperm head and tail associated protein (806 aa).

Disordered stretches follow at residues 1 to 36 (MNSS…PSSC), 257 to 329 (TPAS…MSGS), 428 to 496 (LNNQ…CPQP), and 707 to 806 (SQIN…SKKK). The segment covering 13 to 27 (APSTSPQADCPNNYS) has biased composition (polar residues). Residues 277–290 (PPLSSASSPPSGNP) show a composition bias toward low complexity. Residues 320-329 (LSSQAGMSGS) are compositionally biased toward polar residues. Residues 521-806 (KEPPPETAVL…QIKSPHSKKK (286 aa)) form an interaction with CRISP2 region. Low complexity-rich tracts occupy residues 710-723 (NHQN…KNSS) and 733-754 (RRGA…SSTQ). The segment covering 773-788 (QSQSPADGKIESQSKS) has biased composition (polar residues).

As to quaternary structure, interacts with CRISP2. As to expression, isoforms 3 and 4 are expressed in testis (at protein level).

It localises to the cytoplasm. Its function is as follows. Plays a role during spermatogenesis. The chain is Sperm head and tail associated protein (Nsun4) from Mus musculus (Mouse).